The following is a 326-amino-acid chain: Ras association domain-containing protein 2 (326 aa).

In terms of domain architecture, Ras-associating spans Y176–Q264. The 48-residue stretch at V272–I319 folds into the SARAH domain.

As to quaternary structure, interacts directly with activated KRAS in a GTP-dependent manner. Interacts (via SARAH domain) with STK3/MST2 and STK4/MST1. In terms of processing, phosphorylated by STK3/MST2 and STK4/MST1.

It is found in the nucleus. The protein resides in the cytoplasm. The protein localises to the chromosome. It localises to the centromere. Its subcellular location is the kinetochore. Its function is as follows. Potential tumor suppressor. Acts as a KRAS-specific effector protein. May promote apoptosis and cell cycle arrest. Stabilizes STK3/MST2 by protecting it from proteasomal degradation. This is Ras association domain-containing protein 2 (Rassf2) from Rattus norvegicus (Rat).